A 396-amino-acid polypeptide reads, in one-letter code: Digeranylgeranylglycerophospholipid reductase (396 aa).

FAD-binding residues include Gly14, Glu33, Cys44, Gly45, Gly47, Arg100, Ala124, Glu162, Asp283, Gly295, and Ile296. Residues Lys338 and Val374 each contribute to the a 2,3-bis-O-(geranylgeranyl)-sn-glycerol 1-phospholipid site.

Belongs to the geranylgeranyl reductase family. DGGGPL reductase subfamily. FAD serves as cofactor.

It catalyses the reaction 2,3-bis-O-(phytanyl)-sn-glycerol 1-phosphate + 8 NADP(+) = 2,3-bis-O-(geranylgeranyl)-sn-glycerol 1-phosphate + 8 NADPH + 8 H(+). The catalysed reaction is 2,3-bis-O-(phytanyl)-sn-glycerol 1-phosphate + 8 NAD(+) = 2,3-bis-O-(geranylgeranyl)-sn-glycerol 1-phosphate + 8 NADH + 8 H(+). It carries out the reaction a 2,3-bis-O-phytanyl-sn-glycerol 1-phospholipid + 8 A = a 2,3-bis-O-(geranylgeranyl)-sn-glycerol 1-phospholipid + 8 AH2. The enzyme catalyses CDP-2,3-bis-O-(geranylgeranyl)-sn-glycerol + 8 AH2 = CDP-2,3-bis-O-(phytanyl)-sn-glycerol + 8 A. It catalyses the reaction archaetidylserine + 8 AH2 = 2,3-bis-O-phytanyl-sn-glycero-3-phospho-L-serine + 8 A. The protein operates within membrane lipid metabolism; glycerophospholipid metabolism. Is involved in the reduction of 2,3-digeranylgeranylglycerophospholipids (unsaturated archaeols) into 2,3-diphytanylglycerophospholipids (saturated archaeols) in the biosynthesis of archaeal membrane lipids. Catalyzes the formation of archaetidic acid (2,3-di-O-phytanyl-sn-glyceryl phosphate) from 2,3-di-O-geranylgeranylglyceryl phosphate (DGGGP) via the hydrogenation of each double bond of the isoprenoid chains. Is also probably able to reduce double bonds of geranyl groups in CDP-2,3-bis-O-(geranylgeranyl)-sn-glycerol and archaetidylserine, thus acting at various stages in the biosynthesis of archaeal membrane lipids. The protein is Digeranylgeranylglycerophospholipid reductase of Thermoplasma volcanium (strain ATCC 51530 / DSM 4299 / JCM 9571 / NBRC 15438 / GSS1).